Here is a 714-residue protein sequence, read N- to C-terminus: Fatty acid oxidation complex subunit alpha (714 aa).

The interval 1-190 (MEMASAFTLN…KLGLVDDVVP (190 aa)) is enoyl-CoA hydratase. Residues 306 to 714 (APLNSVGILG…FWKTTATDLQ (409 aa)) are 3-hydroxyacyl-CoA dehydrogenase.

This sequence in the N-terminal section; belongs to the enoyl-CoA hydratase/isomerase family. It in the central section; belongs to the 3-hydroxyacyl-CoA dehydrogenase family. Heterotetramer of two alpha chains (FadJ) and two beta chains (FadI).

It localises to the cytoplasm. It catalyses the reaction a (3S)-3-hydroxyacyl-CoA = a (2E)-enoyl-CoA + H2O. It carries out the reaction a 4-saturated-(3S)-3-hydroxyacyl-CoA = a (3E)-enoyl-CoA + H2O. The enzyme catalyses a (3S)-3-hydroxyacyl-CoA + NAD(+) = a 3-oxoacyl-CoA + NADH + H(+). The catalysed reaction is (3S)-3-hydroxybutanoyl-CoA = (3R)-3-hydroxybutanoyl-CoA. The protein operates within lipid metabolism; fatty acid beta-oxidation. In terms of biological role, catalyzes the formation of a hydroxyacyl-CoA by addition of water on enoyl-CoA. Also exhibits 3-hydroxyacyl-CoA epimerase and 3-hydroxyacyl-CoA dehydrogenase activities. This chain is Fatty acid oxidation complex subunit alpha, found in Escherichia coli O6:H1 (strain CFT073 / ATCC 700928 / UPEC).